The sequence spans 216 residues: 3-isopropylmalate dehydratase small subunit (216 aa).

The protein belongs to the LeuD family. LeuD type 1 subfamily. As to quaternary structure, heterodimer of LeuC and LeuD.

It catalyses the reaction (2R,3S)-3-isopropylmalate = (2S)-2-isopropylmalate. Its pathway is amino-acid biosynthesis; L-leucine biosynthesis; L-leucine from 3-methyl-2-oxobutanoate: step 2/4. Functionally, catalyzes the isomerization between 2-isopropylmalate and 3-isopropylmalate, via the formation of 2-isopropylmaleate. The protein is 3-isopropylmalate dehydratase small subunit of Ralstonia nicotianae (strain ATCC BAA-1114 / GMI1000) (Ralstonia solanacearum).